Here is a 164-residue protein sequence, read N- to C-terminus: Transcriptional regulator MraZ (164 aa).

2 SpoVT-AbrB domains span residues 7-60 and 83-126; these read HYTN…EIDG and SEIL…EPGR. Positions 144–164 are disordered; the sequence is QLSARHAAPDAPPLRSHGARE.

It belongs to the MraZ family. Forms oligomers.

It localises to the cytoplasm. The protein localises to the nucleoid. The polypeptide is Transcriptional regulator MraZ (Methylocella silvestris (strain DSM 15510 / CIP 108128 / LMG 27833 / NCIMB 13906 / BL2)).